The sequence spans 229 residues: Potassium/proton antiporter CemA (229 aa).

3 consecutive transmembrane segments (helical) span residues 6–26 (AFIP…ISLC), 107–127 (ILHF…SFWG), and 189–209 (ILSG…KYWI).

It belongs to the CemA family.

It is found in the plastid. The protein localises to the chloroplast inner membrane. The catalysed reaction is K(+)(in) + H(+)(out) = K(+)(out) + H(+)(in). Contributes to K(+)/H(+) antiport activity by supporting proton efflux to control proton extrusion and homeostasis in chloroplasts in a light-dependent manner to modulate photosynthesis. Prevents excessive induction of non-photochemical quenching (NPQ) under continuous-light conditions. Indirectly promotes efficient inorganic carbon uptake into chloroplasts. The chain is Potassium/proton antiporter CemA from Arabidopsis thaliana (Mouse-ear cress).